Consider the following 241-residue polypeptide: Beta-nerve growth factor (241 aa).

The signal sequence occupies residues 1 to 18; that stretch reads MSMLFYTLITAFLIGTQA. A propeptide spanning residues 19–121 is cleaved from the precursor; sequence EPHSESNVPA…PFNRTHRSKR (103 aa). N-linked (GlcNAc...) asparagine glycosylation is found at N69, N114, and N166. 3 disulfides stabilise this stretch: C136–C201, C179–C229, and C189–C231. Residues Y173 and K209 each contribute to the a 1-acyl-sn-glycero-3-phospho-(1D-myo-inositol) site. A 1-acyl-sn-glycero-3-phospho-L-serine is bound at residue K209.

Belongs to the NGF-beta family. As to quaternary structure, homodimer. The homodimer interacts with a single NTRK1 chain. The homodimer interacts with a single NGFR chain. The NGF dimer interacts with a single SORCS2 chain (via extracellular domain). The NGF precursor (proNGF) binds to a receptor complex formed by SORT1 and NGFR, which leads to NGF endocytosis. Both mature NGF and the immature NGF precursor (proNGF) interact with SORCS2 and with the heterodimer formed by SORCS2 and NGFR (via extracellular domains). The NGF precursor (proNGF) has much higher affinity for SORCS2 than mature NGF. The NGF precursor (proNGF) has much higher affinity for SORT1 than mature NGF. Interacts with ADAM10 in a divalent cation-dependent manner. Interacts with SORCS3.

Its subcellular location is the secreted. The protein resides in the endosome lumen. Nerve growth factor is important for the development and maintenance of the sympathetic and sensory nervous systems. Extracellular ligand for the NTRK1 and NGFR receptors, activates cellular signaling cascades to regulate neuronal proliferation, differentiation and survival. The immature NGF precursor (proNGF) functions as a ligand for the heterodimeric receptor formed by SORCS2 and NGFR, and activates cellular signaling cascades that lead to inactivation of RAC1 and/or RAC2, reorganization of the actin cytoskeleton and neuronal growth cone collapse. In contrast to mature NGF, the precursor form (proNGF) promotes neuronal apoptosis (in vitro). Inhibits metalloproteinase-dependent proteolysis of platelet glycoprotein VI. Binds lysophosphatidylinositol and lysophosphatidylserine between the two chains of the homodimer. The lipid-bound form promotes histamine relase from mast cells, contrary to the lipid-free form. The sequence is that of Beta-nerve growth factor (NGF) from Pan troglodytes (Chimpanzee).